A 142-amino-acid chain; its full sequence is Serine/threonine-protein kinase BtrW (142 aa).

This sequence belongs to the anti-sigma-factor family. In terms of assembly, probably able to multimerize; interacts with BtrV.

It catalyses the reaction L-seryl-[protein] + ATP = O-phospho-L-seryl-[protein] + ADP + H(+). The catalysed reaction is L-threonyl-[protein] + ATP = O-phospho-L-threonyl-[protein] + ADP + H(+). Possible negative regulator of sigma-B activity. Phosphorylates and inactivates its specific antagonist protein, BtrV. Upon phosphorylation of BtrV, BtrW is released and binds to an unknown partner(s) that might be sigma-B, thereby blocking its ability to form a complex with its partner (possibly an RNA polymerase holoenzyme (E-sigma-B)). Involved in type III secretion system (T3SS). Phosphorylates BtrV. This Bordetella bronchiseptica (strain ATCC BAA-588 / NCTC 13252 / RB50) (Alcaligenes bronchisepticus) protein is Serine/threonine-protein kinase BtrW (btrW).